A 1233-amino-acid polypeptide reads, in one-letter code: MGFLKLIEIENFKSYKGRQIIGPFQRFTAIIGPNGSGKSNLMDAISFVLGEKTSNLRVKTLRDLIHGAPVGKPAANRAFVSMVYSEEGAEDRTFARVIVGGSSEYKINNKVVQLHEYSEELEKLGILIKARNFLVFQGAVESIAMKNPKERTALFEEISRSGELAQEYDKRKKEMVKAEEDTQFNYHRKKNIAAERKEAKQEKEEADRYQRLKDEVVRAQVQLQLFKLYHNEVEIEKLNKELASKNKEIEKDKKRMDKVEDELKEKKKELGKMMREQQQIEKEIKEKDSELNQKRPQYIKAKENTSHKIKKLEAAKKSLQNAQKHYKKRKGDMDELEKEMLSVEKARQEFEERMEEESQSQGRDLTLEENQVKKYHRLKEEASKRAATLAQELEKFNRDQKADQDRLDLEERKKVETEAKIKQKLREIEENQKRIEKLEEYITTSKQSLEEQKKLEGELTEEVEMAKRRIDEINKELNQVMEQLGDARIDRQESSRQQRKAEIMESIKRLYPGSVYGRLIDLCQPTQKKYQIAVTKVLGKNMDAIIVDSEKTGRDCIQYIKEQRGEPETFLPLDYLEVKPTDEKLRELKGAKLVIDVIRYEPPHIKKALQYACGNALVCDNVEDARRIAFGGHQRHKTVALDGTLFQKSGVISGGASDLKAKARRWDEKAVDKLKEKKERLTEELKEQMKAKRKEAELRQVQSQAHGLQMRLKYSQSDLEQTKTRHLALNLQEKSKLESELANFGPRINDIKRIIQSREREMKDLKEKMNQVEDEVFEEFCREIGVRNIREFEEEKVKRQNEIAKKRLEFENQKTRLGIQLDFEKNQLKEDQDKVHMWEQTVKKDENEIEKLKKEEQRHMKIIDETMAQLQDLKNQHLAKKSEVNDKNHEMEEIRKKLGGANKEMTHLQKEVTAIETKLEQKRSDRHNLLQACKMQDIKLPLSKGTMDDISQEEGSSQGEDSVSGSQRISSIYAREALIEIDYGDLCEDLKDAQAEEEIKQEMNTLQQKLNEQQSVLQRIAAPNMKAMEKLESVRDKFQETSDEFEAARKRAKKAKQAFEQIKKERFDRFNACFESVATNIDEIYKALSRNSSAQAFLGPENPEEPYLDGINYNCVAPGKRFRPMDNLSGGEKTVAALALLFAIHSYKPAPFFVLDEIDAALDNTNIGKVANYIKEQSTCNFQAIVISLKEEFYTKAESLIGVYPEQGDCVISKVLTFDLTKYPDANPNPNEQ.

32 to 39 (GPNGSGKS) provides a ligand contact to ATP. Coiled coils occupy residues 104–124 (EYKINNKVVQLHEYSEELEKL) and 163–503 (ELAQ…KAEI). A compositionally biased stretch (basic and acidic residues) spans 284–293 (IKEKDSELNQ). Disordered stretches follow at residues 284-308 (IKEKDSELNQKRPQYIKAKENTSHK) and 348-369 (QEFEERMEEESQSQGRDLTLEE). Phosphoserine occurs at positions 358 and 360. The SMC hinge domain occupies 515 to 629 (VYGRLIDLCQ…DNVEDARRIA (115 aa)). N6-acetyllysine occurs at positions 648 and 713. Residues 660–935 (KAKARRWDEK…RHNLLQACKM (276 aa)) are a coiled coil. Positions 947 to 966 (MDDISQEEGSSQGEDSVSGS) are disordered. The span at 953–966 (EEGSSQGEDSVSGS) shows a compositional bias: low complexity. At Ser-957 the chain carries Phosphoserine; by ATM. Ser-962 carries the phosphoserine modification. Ser-966 carries the post-translational modification Phosphoserine; by ATM and ATR. A Phosphoserine modification is found at Ser-970. Residues 991–1068 (KDAQAEEEIK…FEQIKKERFD (78 aa)) adopt a coiled-coil conformation. Lys-1037 carries the post-translational modification N6-acetyllysine.

The protein belongs to the SMC family. SMC1 subfamily. As to quaternary structure, forms a heterodimer with SMC3 in cohesin complexes. Cohesin complexes are composed of the SMC1 (SMC1A or SMC1B) and SMC3 heterodimer attached via their SMC hinge domain, RAD21 which link them, and one STAG protein (STAG1, STAG2 or STAG3), which interacts with RAD21. In germ cell cohesin complexes, SMC1A is mutually exclusive with SMC1B. Interacts with BRCA1. Found in a complex with CDCA5, SMC3 and RAD21, PDS5A/SCC-112 and PDS5B/APRIN. Interacts with NDC80. Interacts with BRAT1. Found in a complex containing POLE and SMC3. Interacts with RPGR, STAG3 and SYCP2. The cohesin complex interacts with the cohesin loading complex subunits NIPBL/Scc2 (via HEAT repeats) and MAU2/Scc4. NIPBL directly contacts all members of the complex, RAD21, SMC1A/B, SMC3 and STAG1. Ubiquitinated by the DCX(DCAF15) complex, leading to its degradation. In terms of processing, phosphorylated by ATM upon ionizing radiation in a NBS1-dependent manner. Phosphorylated by ATR upon DNA methylation in a MSH2/MSH6-dependent manner. Phosphorylation of Ser-957 and Ser-966 activates it and is required for S-phase checkpoint activation.

It localises to the nucleus. The protein resides in the chromosome. The protein localises to the centromere. It is found in the kinetochore. In terms of biological role, involved in chromosome cohesion during cell cycle and in DNA repair. Central component of cohesin complex. The cohesin complex is required for the cohesion of sister chromatids after DNA replication. The cohesin complex apparently forms a large proteinaceous ring within which sister chromatids can be trapped. At anaphase, the complex is cleaved and dissociates from chromatin, allowing sister chromatids to segregate. The cohesin complex may also play a role in spindle pole assembly during mitosis. Involved in DNA repair via its interaction with BRCA1 and its related phosphorylation by ATM, or via its phosphorylation by ATR. Works as a downstream effector both in the ATM/NBS1 branch and in the ATR/MSH2 branch of S-phase checkpoint. In Homo sapiens (Human), this protein is Structural maintenance of chromosomes protein 1A (SMC1A).